A 958-amino-acid chain; its full sequence is Unconventional myosin-Ih (958 aa).

The Myosin motor domain maps to 12-691 (GVQDFVLLDA…TLFATEDAFE (680 aa)). An ATP-binding site is contributed by 105 to 112 (GESGAGKT). Phosphoserine is present on serine 365. Residues 568 to 590 (LSSLLEILISKEPSYIRCIKPNE) are actin-binding. 2 IQ domains span residues 694-716 (KHQL…EYMK) and 717-746 (KRQA…AVQI). One can recognise a TH1 domain in the interval 773 to 955 (RKNYILNLRY…NGQLRVVSAG (183 aa)).

This sequence belongs to the TRAFAC class myosin-kinesin ATPase superfamily. Myosin family. In terms of tissue distribution, highly expressed in the central nervous system, including the forebrain, midbrain and lower medulla. In the lower medulla, it is broadly expressed throughout the reticular formation. It is expressed in the retrotrapezoid nucleus and the nucleus of the solitary tract, as well as motor neurons of the facial, vagal and ambiguus nuclei. Expressed in neonatal inner-ear organs.

In terms of biological role, myosins are actin-based motor molecules with ATPase activity. Unconventional myosins serve in intracellular movements. Their highly divergent tails are presumed to bind to membranous compartments, which would be moved relative to actin filaments. This chain is Unconventional myosin-Ih (Myo1h), found in Mus musculus (Mouse).